The following is a 687-amino-acid chain: MDNQSLKTHYSVYELANLKLKTLPSAPKNIWEQAKRENWKSQKRQGRGGGLEYELASLPIEVQNELLLKTTPEQTAVALQKIEETRPLASNEVWQLWDEASAKAQEQAKIKLGTMFAVANLVESGVNVLDAFRLVCGKENAERLKNNEKLLSVGSLKNWWYRVKDAPRQDWLPLMLNNSGKSSKNVAEIDEAAWQFFKNFYYSREKPSLAHSYEVLKQAAQYNGWRIPSRSSLKRKMERDVPKTEEVFRREGQYALSRLYPSQVRTVAMLQAMEWINGDGYQHNVWVRFPDGEIKRPKTWLWQDVRTRKVLAARTDKSENTDTIRLSLLDVISRYGLPKHLTIDNTRAAANKKMTGGVKNRYRYQVNENEVQGIIPALGIELHWTSIQFGKGRGQAKPIERAFSHGGLGDYVDKHLLLRGAYAGANAYEKPDYDGKNGAEQPVDYATFLMALEQGIQQWNNVGNRLTEICAGKSSYAEAFERDWAVAEKRPISQSQMRLLLTLHEEVRLNQDGTFYLNAGKIGTNKNRYESLALIGTSHKRVVVRYDPANLHDKVWVYAXTGEYLAEAEITEKAGFGDQMAGREHNKAMRNWVKHTEKAAKERAKAEEMELSNYAPAVEFEERFLEMLPEPVKAPQTQAEEVEYEEVLDFNTVRKVPKAVEVEAEEISEFNRDWEKGLELLKKSKGR.

An HTH Mu-type domain is found at 8-74 (THYSVYELAN…ELLLKTTPEQ (67 aa)). The H-T-H motif DNA-binding region spans 398–417 (PIERAFSHGGLGDYVDKHLL).

Its function is as follows. This transposase is essential for integration, replication-transposition, and excision of Mu-like viral DNA. The protein is Mu-like prophage FluMu transposase A of Haemophilus influenzae (strain ATCC 51907 / DSM 11121 / KW20 / Rd).